We begin with the raw amino-acid sequence, 276 residues long: Tyrosinase (276 aa).

Positions 38, 56, 66, 193, 197, and 219 each coordinate Cu cation.

Belongs to the tyrosinase family. Requires Cu(2+) as cofactor.

The catalysed reaction is 2 L-dopa + O2 = 2 L-dopaquinone + 2 H2O. It carries out the reaction L-tyrosine + O2 = L-dopaquinone + H2O. This is a copper-containing oxidase that functions in the formation of pigments such as melanins and other polyphenolic compounds. This is Tyrosinase (melC2) from Streptomyces galbus.